A 316-amino-acid polypeptide reads, in one-letter code: Protoheme IX farnesyltransferase (316 aa).

A run of 9 helical transmembrane segments spans residues 32-52, 53-73, 93-113, 116-136, 152-172, 180-200, 221-241, 252-271, and 289-309; these read VMSL…GHIN, PVLG…SGAL, IPAG…LSGF, VILG…TIFF, NIVI…ACVT, TVLF…LALF, VTKH…VLPS, LVAA…VWRM, and IFYL…AILV.

This sequence belongs to the UbiA prenyltransferase family. Protoheme IX farnesyltransferase subfamily.

It localises to the cell inner membrane. It catalyses the reaction heme b + (2E,6E)-farnesyl diphosphate + H2O = Fe(II)-heme o + diphosphate. Its pathway is porphyrin-containing compound metabolism; heme O biosynthesis; heme O from protoheme: step 1/1. Functionally, converts heme B (protoheme IX) to heme O by substitution of the vinyl group on carbon 2 of heme B porphyrin ring with a hydroxyethyl farnesyl side group. This is Protoheme IX farnesyltransferase from Rhizobium etli (strain ATCC 51251 / DSM 11541 / JCM 21823 / NBRC 15573 / CFN 42).